A 685-amino-acid chain; its full sequence is Glycine--tRNA ligase beta subunit (685 aa).

This sequence belongs to the class-II aminoacyl-tRNA synthetase family. As to quaternary structure, tetramer of two alpha and two beta subunits.

It is found in the cytoplasm. It catalyses the reaction tRNA(Gly) + glycine + ATP = glycyl-tRNA(Gly) + AMP + diphosphate. This chain is Glycine--tRNA ligase beta subunit, found in Azotobacter vinelandii (strain DJ / ATCC BAA-1303).